Consider the following 175-residue polypeptide: Protein ppBat (175 aa).

Residues Cys-74 and Cys-111 each contribute to the Zn(2+) site. Residues Asn-161 and Trp-164 each coordinate riboflavin.

Homodimer.

Binds flavin derivatives, such as lumichrome, riboflavin, FMN, and FAD. May act as a flavin storage protein. Appears to lack proteolytic or chaperone activities. In Bacteroides thetaiotaomicron (strain ATCC 29148 / DSM 2079 / JCM 5827 / CCUG 10774 / NCTC 10582 / VPI-5482 / E50), this protein is Protein ppBat.